A 1098-amino-acid polypeptide reads, in one-letter code: Platelet-derived growth factor receptor beta (1098 aa).

The signal sequence occupies residues 1-31 (MGLPGVIPALVLRGQLLLSVLWLLGPQTSRG). Residues 32–531 (LVITPPGPEF…VVPHSLPFKV (500 aa)) are Extracellular-facing. 5 Ig-like C2-type domains span residues 33–119 (VITP…YIFV), 128–209 (PMDS…YSLQ), 213–308 (INVS…INIS), 330–402 (HRSR…HEDD), and 415–523 (PVRV…VTVV). N-linked (GlcNAc...) asparagine glycosylation is found at Asn44, Asn88, and Asn102. A disulfide bridge connects residues Cys53 and Cys99. An intrachain disulfide couples Cys148 to Cys189. The N-linked (GlcNAc...) asparagine glycan is linked to Asn214. Cys234 and Cys290 form a disulfide bridge. Residues Asn291, Asn306, Asn353, Asn370, Asn444, Asn467, and Asn478 are each glycosylated (N-linked (GlcNAc...) asparagine). Residues Cys435 and Cys507 are joined by a disulfide bond. The chain crosses the membrane as a helical span at residues 532–552 (VVISAILALVVLTVISLIILI). At 553-1098 (MLWQKKPRYE…PLAEAEDSFL (546 aa)) the chain is on the cytoplasmic side. Residues Tyr561, Tyr578, and Tyr580 each carry the phosphotyrosine; by autocatalysis modification. Residues 599 to 961 (LVLGRTLGSG…QLVLLLERLL (363 aa)) enclose the Protein kinase domain. Residues 605–613 (LGSGAFGQV) and Lys633 contribute to the ATP site. Phosphotyrosine; by ABL1 and ABL2 is present on Tyr685. 7 positions are modified to phosphotyrosine; by autocatalysis: Tyr715, Tyr739, Tyr750, Tyr762, Tyr770, Tyr774, and Tyr777. The Proton acceptor role is filled by Asp825. Tyr856 is subject to Phosphotyrosine; by autocatalysis. Phosphotyrosine; by ABL1 and ABL2 occurs at positions 933 and 969. Residues Tyr1008 and Tyr1020 each carry the phosphotyrosine; by autocatalysis modification. Residues 1016-1098 (SDNDYIIPLP…PLAEAEDSFL (83 aa)) are disordered. A compositionally biased stretch (polar residues) spans 1042–1059 (SLASSTLNEVNTSSTISC). The segment covering 1062–1082 (PLELQEEPQQAEPEAQLEQPQ) has biased composition (low complexity).

It belongs to the protein kinase superfamily. Tyr protein kinase family. CSF-1/PDGF receptor subfamily. In terms of assembly, interacts with homodimeric PDGFB and PDGFD, and with heterodimers formed by PDGFA and PDGFB. May also interact with homodimeric PDGFC. Monomer in the absence of bound ligand. Interaction with homodimeric PDGFB, heterodimers formed by PDGFA and PDGFB or homodimeric PDGFD, leads to receptor dimerization, where both PDGFRA homodimers and heterodimers with PDGFRB are observed. Interacts with SH2B2/APS. Interacts directly (tyrosine phosphorylated) with SHB. Interacts (tyrosine phosphorylated) with PIK3R1 and RASA1. Interacts (tyrosine phosphorylated) with CBL. Interacts (tyrosine phosphorylated) with SRC and SRC family kinases. Interacts (tyrosine phosphorylated) with PIK3C2B, maybe indirectly. Interacts (tyrosine phosphorylated) with SHC1, GRB7, GRB10 and NCK1. Interaction with GRB2 is mediated by SHC1. Interacts (via C-terminus) with NHERF1. Autophosphorylated on tyrosine residues upon ligand binding. Autophosphorylation occurs in trans, i.e. one subunit of the dimeric receptor phosphorylates tyrosine residues on the other subunit. Phosphorylation at Tyr-578, and to a lesser degree, Tyr-580 is important for interaction with SRC. Phosphorylation at Tyr-715 is important for interaction with GRB2. Phosphorylation at Tyr-739 and Tyr-750 is important for interaction with PIK3R1. Phosphorylation at Tyr-750 is important for interaction with NCK1. Phosphorylation at Tyr-770 and Tyr-856 is important for interaction with RASA1/GAP. Phosphorylation at Tyr-856 is important for efficient phosphorylation of PLCG1 and PTPN11, resulting in increased phosphorylation of AKT1, MAPK1/ERK2 and/or MAPK3/ERK1, PDCD6IP/ALIX and STAM, and in increased cell proliferation. Phosphorylation at Tyr-1008 is important for interaction with PTPN11. Phosphorylation at Tyr-1008 and Tyr-1020 is important for interaction with PLCG1. Dephosphorylated by PTPRJ at Tyr-750, Tyr-856, Tyr-1008 and Tyr-1020. Dephosphorylated by PTPN2 at Tyr-578 and Tyr-1020. In terms of processing, N-glycosylated. Post-translationally, ubiquitinated. After autophosphorylation, the receptor is polyubiquitinated, leading to its degradation. Weakly expressed in glomerular mesangial cells and interstitial cells. Up-regulated in areas of renal fibrosis. In mice with unilateral ureteral obstruction, increased expression in interstitial cells at day 4 and expression is markedly elevated at day 7 and is maximal at day 14.

It is found in the cell membrane. The protein localises to the cytoplasmic vesicle. The protein resides in the lysosome lumen. The enzyme catalyses L-tyrosyl-[protein] + ATP = O-phospho-L-tyrosyl-[protein] + ADP + H(+). Its activity is regulated as follows. Present in an inactive conformation in the absence of bound ligand. Binding of PDGFB and/or PDGFD leads to dimerization and activation by autophosphorylation on tyrosine residues. Functionally, tyrosine-protein kinase that acts as a cell-surface receptor for homodimeric PDGFB and PDGFD and for heterodimers formed by PDGFA and PDGFB, and plays an essential role in the regulation of embryonic development, cell proliferation, survival, differentiation, chemotaxis and migration. Plays an essential role in blood vessel development by promoting proliferation, migration and recruitment of pericytes and smooth muscle cells to endothelial cells. Plays a role in the migration of vascular smooth muscle cells and the formation of neointima at vascular injury sites. Required for normal development of the cardiovascular system. Required for normal recruitment of pericytes (mesangial cells) in the kidney glomerulus, and for normal formation of a branched network of capillaries in kidney glomeruli. Promotes rearrangement of the actin cytoskeleton and the formation of membrane ruffles. Binding of its cognate ligands - homodimeric PDGFB, heterodimers formed by PDGFA and PDGFB or homodimeric PDGFD -leads to the activation of several signaling cascades; the response depends on the nature of the bound ligand and is modulated by the formation of heterodimers between PDGFRA and PDGFRB. Phosphorylates PLCG1, PIK3R1, PTPN11, RASA1/GAP, CBL, SHC1 and NCK1. Activation of PLCG1 leads to the production of the cellular signaling molecules diacylglycerol and inositol 1,4,5-trisphosphate, mobilization of cytosolic Ca(2+) and the activation of protein kinase C. Phosphorylation of PIK3R1, the regulatory subunit of phosphatidylinositol 3-kinase, leads to the activation of the AKT1 signaling pathway. Phosphorylation of SHC1, or of the C-terminus of PTPN11, creates a binding site for GRB2, resulting in the activation of HRAS, RAF1 and down-stream MAP kinases, including MAPK1/ERK2 and/or MAPK3/ERK1. Promotes phosphorylation and activation of SRC family kinases. Promotes phosphorylation of PDCD6IP/ALIX and STAM. Receptor signaling is down-regulated by protein phosphatases that dephosphorylate the receptor and its down-stream effectors, and by rapid internalization of the activated receptor. The sequence is that of Platelet-derived growth factor receptor beta (Pdgfrb) from Mus musculus (Mouse).